Here is a 366-residue protein sequence, read N- to C-terminus: Isocitrate dehydrogenase [NAD] subunit alpha, mitochondrial (366 aa).

The N-terminal 27 residues, 1-27, are a transit peptide targeting the mitochondrion; the sequence is MAGPAWISKVSRLLGAFHNQKQVTRGF. The residue at position 77 (K77) is an N6-succinyllysine. Phosphothreonine is present on T101. 3 residues coordinate substrate: R115, R125, and R146. An N6-acetyllysine modification is found at K223. 3 residues coordinate Mg(2+): D233, D257, and D261. K343 is subject to N6-acetyllysine; alternate. Position 343 is an N6-succinyllysine; alternate (K343). K350 bears the N6-succinyllysine mark.

This sequence belongs to the isocitrate and isopropylmalate dehydrogenases family. In terms of assembly, heterooligomer of subunits alpha (IDH3A), beta (IDH3B), and gamma (IDH3G) in the apparent ratio of 2:1:1. The heterodimer containing one IDH3A and one IDH3B subunit and the heterodimer containing one IDH3A and one IDH3G subunit assemble into a heterotetramer (which contains two subunits of IDH3A, one of IDH3B and one of IDH3G) and further into the heterooctamer. It depends on Mg(2+) as a cofactor. Mn(2+) is required as a cofactor.

It is found in the mitochondrion. The catalysed reaction is D-threo-isocitrate + NAD(+) = 2-oxoglutarate + CO2 + NADH. The heterotetramer and the heterodimer composed of IDH3A and IDH3G subunits can be allosterically activated by citrate (CIT) or/and ADP, and the two activators can act independently or synergistically. The heterodimer composed of IDH3A and IDH3B subunits cannot be allosterically regulated and the allosteric regulation of the heterotetramer is through the IDH3G subunit and not the IDH3B subunit. The IDH3G subunit contains the allosteric site which consists of a CIT-binding site and an ADP-binding site, and the binding of CIT and ADP causes conformational changes at the allosteric site which are transmitted to the active site in the catalytic subunit (IDH3A) through a cascade of conformational changes at the heterodimer interface, leading to stabilization of the isocitrate-binding at the active site and thus activation of the enzyme. ATP can activate the heterotetramer and the heterodimer composed of IDH3A and IDH3G subunits at low concentrations but inhibits their activities at high concentrations, whereas ATP exhibits only inhibitory effect on the heterodimer composed of IDH3A and IDH3B subunits. Catalytic subunit of the enzyme which catalyzes the decarboxylation of isocitrate (ICT) into alpha-ketoglutarate. The heterodimer composed of the alpha (IDH3A) and beta (IDH3B) subunits and the heterodimer composed of the alpha (IDH3A) and gamma (IDH3G) subunits, have considerable basal activity but the full activity of the heterotetramer (containing two subunits of IDH3A, one of IDH3B and one of IDH3G) requires the assembly and cooperative function of both heterodimers. In Sus scrofa (Pig), this protein is Isocitrate dehydrogenase [NAD] subunit alpha, mitochondrial (IDH3A).